A 230-amino-acid chain; its full sequence is Orotidine 5'-phosphate decarboxylase (230 aa).

Residues D10, K32, 59 to 68 (DLKYHDIPNT), T119, R180, Q189, G209, and R210 contribute to the substrate site. The active-site Proton donor is the K61.

Belongs to the OMP decarboxylase family. Type 1 subfamily. In terms of assembly, homodimer.

The catalysed reaction is orotidine 5'-phosphate + H(+) = UMP + CO2. It participates in pyrimidine metabolism; UMP biosynthesis via de novo pathway; UMP from orotate: step 2/2. Catalyzes the decarboxylation of orotidine 5'-monophosphate (OMP) to uridine 5'-monophosphate (UMP). This Actinobacillus pleuropneumoniae serotype 5b (strain L20) protein is Orotidine 5'-phosphate decarboxylase.